The following is a 1381-amino-acid chain: DNA-directed RNA polymerase subunit beta'' (1381 aa).

Residues Cys224, Cys295, Cys302, and Cys305 each coordinate Zn(2+).

It belongs to the RNA polymerase beta' chain family. RpoC2 subfamily. In terms of assembly, in plastids the minimal PEP RNA polymerase catalytic core is composed of four subunits: alpha, beta, beta', and beta''. When a (nuclear-encoded) sigma factor is associated with the core the holoenzyme is formed, which can initiate transcription. Zn(2+) serves as cofactor.

The protein localises to the plastid. It is found in the chloroplast. It catalyses the reaction RNA(n) + a ribonucleoside 5'-triphosphate = RNA(n+1) + diphosphate. Functionally, DNA-dependent RNA polymerase catalyzes the transcription of DNA into RNA using the four ribonucleoside triphosphates as substrates. The polypeptide is DNA-directed RNA polymerase subunit beta'' (Lactuca sativa (Garden lettuce)).